Consider the following 611-residue polypeptide: Dihydroxy-acid dehydratase (611 aa).

Mg(2+) is bound at residue aspartate 81. A [2Fe-2S] cluster-binding site is contributed by cysteine 122. Mg(2+) is bound by residues aspartate 123 and lysine 124. Lysine 124 bears the N6-carboxylysine mark. Position 195 (cysteine 195) interacts with [2Fe-2S] cluster. Glutamate 491 lines the Mg(2+) pocket. Serine 517 serves as the catalytic Proton acceptor.

The protein belongs to the IlvD/Edd family. In terms of assembly, homodimer. [2Fe-2S] cluster is required as a cofactor. Mg(2+) serves as cofactor.

It catalyses the reaction (2R)-2,3-dihydroxy-3-methylbutanoate = 3-methyl-2-oxobutanoate + H2O. It carries out the reaction (2R,3R)-2,3-dihydroxy-3-methylpentanoate = (S)-3-methyl-2-oxopentanoate + H2O. Its pathway is amino-acid biosynthesis; L-isoleucine biosynthesis; L-isoleucine from 2-oxobutanoate: step 3/4. The protein operates within amino-acid biosynthesis; L-valine biosynthesis; L-valine from pyruvate: step 3/4. Functionally, functions in the biosynthesis of branched-chain amino acids. Catalyzes the dehydration of (2R,3R)-2,3-dihydroxy-3-methylpentanoate (2,3-dihydroxy-3-methylvalerate) into 2-oxo-3-methylpentanoate (2-oxo-3-methylvalerate) and of (2R)-2,3-dihydroxy-3-methylbutanoate (2,3-dihydroxyisovalerate) into 2-oxo-3-methylbutanoate (2-oxoisovalerate), the penultimate precursor to L-isoleucine and L-valine, respectively. The chain is Dihydroxy-acid dehydratase from Brucella melitensis biotype 1 (strain ATCC 23456 / CCUG 17765 / NCTC 10094 / 16M).